The primary structure comprises 125 residues: Synaptobrevin (125 aa).

Positions 1-46 are disordered; sequence MSGPQNPQAGPGGPPSGPPQPGGPPGPPQGPPQPVQQSKRLQQTQA. Residues 1–103 lie on the Cytoplasmic side of the membrane; the sequence is MSGPQNPQAG…KRKFWWKNCK (103 aa). Pro residues predominate over residues 12 to 34; it reads GGPPSGPPQPGGPPGPPQGPPQP. In terms of domain architecture, v-SNARE coiled-coil homology spans 40 to 100; sequence RLQQTQAQVE…GKLKRKFWWK (61 aa). A helical; Anchor for type IV membrane protein membrane pass occupies residues 104–123; sequence MMIILGGIVAVIVTVIIVWA. At 124-125 the chain is on the vesicular side; it reads AT.

The protein belongs to the synaptobrevin family.

It localises to the cytoplasmic vesicle. The protein resides in the secretory vesicle. Its subcellular location is the synaptic vesicle membrane. The protein localises to the synapse. It is found in the synaptosome. In terms of biological role, intrinsic membrane protein of small synaptic vesicles. The chain is Synaptobrevin from Doryteuthis pealeii (Longfin inshore squid).